The primary structure comprises 117 residues: Translation initiation factor 1A (117 aa).

Residues 17–92 enclose the S1-like domain; the sequence is IRVPLPDRSK…ERGDIVYRYT (76 aa).

This sequence belongs to the eIF-1A family.

Seems to be required for maximal rate of protein biosynthesis. Enhances ribosome dissociation into subunits and stabilizes the binding of the initiator Met-tRNA(I) to 40 S ribosomal subunits. The polypeptide is Translation initiation factor 1A (Thermococcus kodakarensis (strain ATCC BAA-918 / JCM 12380 / KOD1) (Pyrococcus kodakaraensis (strain KOD1))).